The chain runs to 1178 residues: MFELNNFDALQIGLASPEKIREWSRGEVKKPETINYRTLKPERDGLFCERIFGPMKDWECHCGKYKRIRYKGIVCDRCGVEVTKAKVRRERMGHIELAAPVSHIWYFKGIPSRMGLILDMSPRALEKVLYFASYVVLDPKETPLLKKQLLNEKEYRESIDKYGDDSFVAAMGAEAVKTLLDEIDLEQSSIELKEELKTSTGQKKIRIIRRLEVVESFRKSGNRPDWMVIDVIPVIPPDLRPMVQLDGGRFATSDLNDLYRRVINRNNRLKKLLDLGAPDIIVRNEKRMLQEAVDALIDNGRRGRPVTGPGNRPLKSLSDMLKGKQGRFRQNLLGKRVDYSGRSVIVVGPELKMYQCGLPKEMALELFKPFVMKKLVQNGLAHNIKSAKRMVERVQPQVWDVLEEVISDHPVLLNRAPTLHRLGIQAFQPVLVEGRAIKLHPLVCTAYNADFDGDQMAVHVPLSVEAQAEARFLMLAAHNILKPSDGKPVSVPTQDMVLGSYYLTMDKDGVKGEGKVFSCPEEVLMAYQCKAVDIHAKIKVRLKKVIDGETIERIIETTPGKIIFNESIPQDLGYIDRTVPENKLKLEVDFLVSKKTLGGIINRCYMKHGATKTSIMLDKIKAKGYHYSTIGAITISTSDMVVPEAKRELLQNTEKQVEKIQKMYRRGFISEEERYEKVIDLWTKTTEDVANALMGSLDSFNPIYMMADSGARGSKSQIKQLAGMRGLMANPSGKIIELPIKASFREGLDVLEYFISTHGARKGNADTALKTADSGYLTRRLVDVSQDVIVRQEDCGTEEGYEVSEIKEGNEVIEPLVERLSGRYPSEDIIHPTTGEVIVKRNTYMNEDIAKKVSDAGIKKVKIRSVFTCKSKHGVCARCYGMNMATSQKIHIGEAVGIVAAQSIGEPGTQLTMRTFHTGGVAGADITQGLPRVEELFEARKPKGLAIVSEVSGTVKMEETKKKRTIIVVTDDGEEVSYDIPFGSRIKVKNGDIISAGDEITEGSINPHDILRIKGVDGVKNYLLSEVQKVYRLQGVDINDKHLEVVIRQMTRKIKIEDSGDTELLPGTMIDVFDFEEANREILEKGGEPAVGRIALLGITKAALATDSFLSAASFQETTRVLTDAAIKGKIDPLLGLKENVIIGKLIPAGTGMTRYRSIQINTDDENIEEDSMDSIEV.

Zn(2+) contacts are provided by Cys60, Cys62, Cys75, and Cys78. Positions 450, 452, and 454 each coordinate Mg(2+). Cys795, Cys869, Cys876, and Cys879 together coordinate Zn(2+).

This sequence belongs to the RNA polymerase beta' chain family. As to quaternary structure, the RNAP catalytic core consists of 2 alpha, 1 beta, 1 beta' and 1 omega subunit. When a sigma factor is associated with the core the holoenzyme is formed, which can initiate transcription. The cofactor is Mg(2+). Zn(2+) serves as cofactor.

It catalyses the reaction RNA(n) + a ribonucleoside 5'-triphosphate = RNA(n+1) + diphosphate. DNA-dependent RNA polymerase catalyzes the transcription of DNA into RNA using the four ribonucleoside triphosphates as substrates. This is DNA-directed RNA polymerase subunit beta' from Clostridium botulinum (strain Okra / Type B1).